Here is a 303-residue protein sequence, read N- to C-terminus: Vacuolar protein sorting-associated protein 26B (303 aa).

It belongs to the VPS26 family. In terms of assembly, component of the retromer complex which consists of VPS29 (MAG1), VPS26 (VPS26A or VPS26B), VPS35 (VPS35A or VPS35B or VPS35C), VPS5/17 (SNX1 or SNX2A or SNX2B). Component of a retromer subcomplex consisting of VPS29 (MAG1), VPS26 (VPS26A or VPS26B), VPS35 (VPS35A or VPS35B or VPS35C).

It localises to the cytoplasm. Its subcellular location is the endosome membrane. The protein localises to the prevacuolar compartment membrane. The protein resides in the golgi apparatus. It is found in the trans-Golgi network membrane. Functionally, plays a role in vesicular protein sorting. Component of the membrane-associated retromer complex which is essential in endosome-to-Golgi retrograde transport. The VPS29-VPS26-VPS35 subcomplex may be involved in recycling of specific cargos from endosome to the plasma membrane. The polypeptide is Vacuolar protein sorting-associated protein 26B (VPS26B) (Arabidopsis thaliana (Mouse-ear cress)).